A 515-amino-acid chain; its full sequence is UDP-glucosyltransferase 2 (515 aa).

The first 20 residues, methionine 1–glycine 20, serve as a signal peptide directing secretion. The Lumenal segment spans residues alanine 21–glutamine 471. 3 N-linked (GlcNAc...) asparagine glycosylation sites follow: asparagine 51, asparagine 236, and asparagine 303. A helical transmembrane segment spans residues tyrosine 472–valine 492. The Cytoplasmic segment spans residues lysine 493–asparagine 515.

It belongs to the UDP-glycosyltransferase family. Post-translationally, glycosylated.

The protein localises to the endoplasmic reticulum membrane. It catalyses the reaction kermesate + UDP-alpha-D-glucose = carminate + UDP + 2 H(+). It carries out the reaction flavokermesate + UDP-alpha-D-glucose = flavokermesate 7-C-beta-D-glucoside + UDP + 2 H(+). In terms of biological role, membrane-bound UDP-glucosyltransferase (UGT) which catalyzes the C-glucosylation of kermesate and flavokermesate to produce carminate and flavokermesate 7-C-beta-D-glucoside (dcll) respectively. Carminate is used as a deterrent against insect predators. The sequence is that of UDP-glucosyltransferase 2 from Dactylopius coccus (Cochineal).